A 570-amino-acid chain; its full sequence is Low-affinity glucose transporter HXT1 (570 aa).

Positions methionine 1–glutamate 20 are enriched in polar residues. The interval methionine 1–alanine 51 is disordered. Residues methionine 1–glycine 60 are Cytoplasmic-facing. Phosphoserine occurs at positions 23, 38, and 44. Residues glycine 34–leucine 43 show a composition bias toward basic and acidic residues. Residues valine 61–tryptophan 81 traverse the membrane as a helical segment. Topologically, residues aspartate 82–glycine 116 are extracellular. The chain crosses the membrane as a helical span at residues leucine 117 to glycine 137. Topologically, residues aspartate 138–arginine 143 are cytoplasmic. The helical transmembrane segment at isoleucine 144–isoleucine 164 threads the bilayer. The Extracellular portion of the chain corresponds to asparagine 165–arginine 174. A helical transmembrane segment spans residues isoleucine 175–valine 195. Residues alanine 196–arginine 201 lie on the Cytoplasmic side of the membrane. A helical transmembrane segment spans residues glycine 202–threonine 222. Residues asparagine 223 to arginine 236 lie on the Extracellular side of the membrane. Residue asparagine 228 is glycosylated (N-linked (GlcNAc...) asparagine). The helical transmembrane segment at valine 237 to proline 257 threads the bilayer. The Cytoplasmic segment spans residues glutamate 258 to aspartate 340. The helical transmembrane segment at asparagine 341–serine 357 threads the bilayer. Residues aspartate 358–serine 363 lie on the Extracellular side of the membrane. A helical membrane pass occupies residues isoleucine 364 to valine 381. Topologically, residues aspartate 382–asparagine 388 are cytoplasmic. The chain crosses the membrane as a helical span at residues cysteine 389 to valine 409. Topologically, residues threonine 410 to valine 431 are extracellular. Residues phenylalanine 432–isoleucine 452 form a helical membrane-spanning segment. The Cytoplasmic segment spans residues serine 453 to serine 469. Residues alanine 470–isoleucine 490 traverse the membrane as a helical segment. A topological domain (extracellular) is located at residue asparagine 491. A helical transmembrane segment spans residues phenylalanine 492–phenylalanine 512. Over valine 513–lysine 570 the chain is Cytoplasmic.

It belongs to the major facilitator superfamily. Sugar transporter (TC 2.A.1.1) family.

The protein localises to the membrane. In terms of biological role, low-affinity glucose transporter. HXT1 is as well involved in the transport of mannose. The polypeptide is Low-affinity glucose transporter HXT1 (HXT1) (Saccharomyces cerevisiae (strain ATCC 204508 / S288c) (Baker's yeast)).